The following is a 360-amino-acid chain: Putative agmatine deiminase (360 aa).

C353 serves as the catalytic Amidino-cysteine intermediate.

This sequence belongs to the agmatine deiminase family.

It carries out the reaction agmatine + H2O = N-carbamoylputrescine + NH4(+). This is Putative agmatine deiminase from Vibrio parahaemolyticus serotype O3:K6 (strain RIMD 2210633).